The chain runs to 759 residues: Arylphorin subunit A4 (759 aa).

Residues 1–16 (MKIAIVLLAIIALVAA) form the signal peptide.

Belongs to the hemocyanin family. In terms of assembly, heterohexamer. As to expression, fat body.

The protein resides in the secreted. It localises to the extracellular space. Its function is as follows. Arylphorin is a larval storage protein (LSP) which may serve as a storage protein used primarily as a source of aromatic amino acids for protein synthesis during metamorphosis. It is a constituent of the sclerotizing system of the cuticle, and serves as a carrier for ecdysteroid hormone. The polypeptide is Arylphorin subunit A4 (Calliphora vicina (Blue blowfly)).